The sequence spans 49 residues: Large ribosomal subunit protein bL33B (49 aa).

The protein belongs to the bacterial ribosomal protein bL33 family.

The polypeptide is Large ribosomal subunit protein bL33B (Geobacillus thermodenitrificans (strain NG80-2)).